Reading from the N-terminus, the 510-residue chain is NAD(P)H-quinone oxidoreductase subunit 2 B, chloroplastic (510 aa).

13 consecutive transmembrane segments (helical) span residues 24-44 (LLLF…GLIL), 57-77 (LPWF…ALLF), 99-119 (IFQF…VEYI), 124-144 (MAIT…MFLC), 149-169 (LITI…LSGY), 183-203 (YLLM…WLYG), 227-247 (PGIS…LSPA), 295-315 (WHLL…IIAI), 323-343 (MLAY…IVGD), 354-374 (YMLF…LFGL), 395-415 (ALSL…AGFF), 428-448 (GLYS…YYYL), and 484-504 (MIVC…IIAI).

It belongs to the complex I subunit 2 family. In terms of assembly, NDH is composed of at least 16 different subunits, 5 of which are encoded in the nucleus.

It is found in the plastid. The protein resides in the chloroplast thylakoid membrane. The enzyme catalyses a plastoquinone + NADH + (n+1) H(+)(in) = a plastoquinol + NAD(+) + n H(+)(out). It catalyses the reaction a plastoquinone + NADPH + (n+1) H(+)(in) = a plastoquinol + NADP(+) + n H(+)(out). Its function is as follows. NDH shuttles electrons from NAD(P)H:plastoquinone, via FMN and iron-sulfur (Fe-S) centers, to quinones in the photosynthetic chain and possibly in a chloroplast respiratory chain. The immediate electron acceptor for the enzyme in this species is believed to be plastoquinone. Couples the redox reaction to proton translocation, and thus conserves the redox energy in a proton gradient. In Jasminum nudiflorum (Winter jasmine), this protein is NAD(P)H-quinone oxidoreductase subunit 2 B, chloroplastic.